The following is a 179-amino-acid chain: Stress response regulator gls24 homolog (179 aa).

Residues 147 to 179 are disordered; the sequence is TSEFTSHQVENVKASVDNGVEKLQDQKAEPRVK. The span at 165 to 179 shows a compositional bias: basic and acidic residues; that stretch reads GVEKLQDQKAEPRVK.

Belongs to the asp23 family.

This chain is Stress response regulator gls24 homolog, found in Streptococcus pyogenes serotype M28 (strain MGAS6180).